A 417-amino-acid polypeptide reads, in one-letter code: Serine hydroxymethyltransferase (417 aa).

(6S)-5,6,7,8-tetrahydrofolate-binding positions include L121 and 125 to 127; that span reads GHL. K229 carries the post-translational modification N6-(pyridoxal phosphate)lysine. 355–357 lines the (6S)-5,6,7,8-tetrahydrofolate pocket; that stretch reads SPF.

It belongs to the SHMT family. Homodimer. Pyridoxal 5'-phosphate serves as cofactor.

The protein resides in the cytoplasm. It catalyses the reaction (6R)-5,10-methylene-5,6,7,8-tetrahydrofolate + glycine + H2O = (6S)-5,6,7,8-tetrahydrofolate + L-serine. It functions in the pathway one-carbon metabolism; tetrahydrofolate interconversion. Its pathway is amino-acid biosynthesis; glycine biosynthesis; glycine from L-serine: step 1/1. Catalyzes the reversible interconversion of serine and glycine with tetrahydrofolate (THF) serving as the one-carbon carrier. This reaction serves as the major source of one-carbon groups required for the biosynthesis of purines, thymidylate, methionine, and other important biomolecules. Also exhibits THF-independent aldolase activity toward beta-hydroxyamino acids, producing glycine and aldehydes, via a retro-aldol mechanism. This is Serine hydroxymethyltransferase from Buchnera aphidicola subsp. Baizongia pistaciae (strain Bp).